A 528-amino-acid polypeptide reads, in one-letter code: Atypical kinase COQ8B, mitochondrial (528 aa).

The helical transmembrane segment at 93-109 (LASFGGLAVGLGLGALA) threads the bilayer. Residues 151–154 (KIGQ) carry the KxGQ motif motif. In terms of domain architecture, Protein kinase spans 187-419 (MMKVLEEELG…DRVLQKSQDL (233 aa)). Positions 212-215 (AAAS) match the AAAS motif motif. ATP contacts are provided by residues S215, K233, and 320 to 323 (MELA). D363 serves as the catalytic Proton acceptor. Residues N368 and D382 each contribute to the ATP site.

The protein belongs to the protein kinase superfamily. ADCK protein kinase family. Homodimer; homodimerizes via its transmembrane region. Interacts with COQ6 and COQ7. Interacts with the multi-subunit COQ enzyme complex, composed of at least COQ3, COQ4, COQ5, COQ6, COQ7 and COQ9. In the kidney, expressed in glomeruli, predominantly in podocyte foot precesses, as well as in proximal tubules and collecting ducts (at protein level).

It is found in the mitochondrion membrane. The protein localises to the cytoplasm. It localises to the cytosol. Its subcellular location is the cell membrane. It participates in cofactor biosynthesis; ubiquinone biosynthesis. Functionally, atypical kinase involved in the biosynthesis of coenzyme Q, also named ubiquinone, an essential lipid-soluble electron transporter for aerobic cellular respiration. Its substrate specificity is still unclear: may act as a protein kinase that mediates phosphorylation of COQ3. According to other reports, acts as a small molecule kinase, possibly a lipid kinase that phosphorylates a prenyl lipid in the ubiquinone biosynthesis pathway, as suggested by its ability to bind coenzyme Q lipid intermediates. However, the small molecule kinase activity was not confirmed by another publication. Required for podocyte migration. The sequence is that of Atypical kinase COQ8B, mitochondrial from Rattus norvegicus (Rat).